Consider the following 194-residue polypeptide: Cytochrome c oxidase assembly protein CtaG (194 aa).

At 1 to 12 (MALRGPAKTVAQ) the chain is on the cytoplasmic side. The chain crosses the membrane as a helical; Signal-anchor for type II membrane protein span at residues 13-35 (TVSVVIFMGALAWASVPLYDWFC). Residues 36–194 (RVTGFGGVTG…IEENSDTSLN (159 aa)) lie on the Periplasmic side of the membrane.

The protein belongs to the COX11/CtaG family.

Its subcellular location is the cell inner membrane. In terms of biological role, exerts its effect at some terminal stage of cytochrome c oxidase synthesis, probably by being involved in the insertion of the copper B into subunit I. In Roseobacter denitrificans (strain ATCC 33942 / OCh 114) (Erythrobacter sp. (strain OCh 114)), this protein is Cytochrome c oxidase assembly protein CtaG.